We begin with the raw amino-acid sequence, 162 residues long: Lipoprotein signal peptidase (162 aa).

Helical transmembrane passes span Trp12–Gln32, Trp70–Ser90, and Ala102–Val122. Residues Asp123 and Asp141 contribute to the active site. A helical membrane pass occupies residues Phe137 to Leu157.

Belongs to the peptidase A8 family.

Its subcellular location is the cell inner membrane. It carries out the reaction Release of signal peptides from bacterial membrane prolipoproteins. Hydrolyzes -Xaa-Yaa-Zaa-|-(S,diacylglyceryl)Cys-, in which Xaa is hydrophobic (preferably Leu), and Yaa (Ala or Ser) and Zaa (Gly or Ala) have small, neutral side chains.. The protein operates within protein modification; lipoprotein biosynthesis (signal peptide cleavage). Its function is as follows. This protein specifically catalyzes the removal of signal peptides from prolipoproteins. The polypeptide is Lipoprotein signal peptidase (Citrobacter koseri (strain ATCC BAA-895 / CDC 4225-83 / SGSC4696)).